We begin with the raw amino-acid sequence, 107 residues long: Phosphoribosyl-ATP pyrophosphatase (107 aa).

This sequence belongs to the PRA-PH family.

The protein localises to the cytoplasm. It catalyses the reaction 1-(5-phospho-beta-D-ribosyl)-ATP + H2O = 1-(5-phospho-beta-D-ribosyl)-5'-AMP + diphosphate + H(+). It functions in the pathway amino-acid biosynthesis; L-histidine biosynthesis; L-histidine from 5-phospho-alpha-D-ribose 1-diphosphate: step 2/9. In Sinorhizobium fredii (strain NBRC 101917 / NGR234), this protein is Phosphoribosyl-ATP pyrophosphatase.